A 178-amino-acid polypeptide reads, in one-letter code: Large ribosomal subunit protein uL6 (178 aa).

This sequence belongs to the universal ribosomal protein uL6 family. In terms of assembly, part of the 50S ribosomal subunit.

Its function is as follows. This protein binds to the 23S rRNA, and is important in its secondary structure. It is located near the subunit interface in the base of the L7/L12 stalk, and near the tRNA binding site of the peptidyltransferase center. This Aliarcobacter butzleri (strain RM4018) (Arcobacter butzleri) protein is Large ribosomal subunit protein uL6.